A 138-amino-acid chain; its full sequence is MAEEKHHHHLFHHKKDDEPATGVDSYGEGVYTSETVTTEVVAGGQDEYERYKKEEKQHKHKQHLGEAGALAAGAFALYEKHEAKKDPENAHRHKITEEIAATAAVGAGGYAFHEHHEKKKDHKSAEESTGEKKHHLFG.

Residues 1–13 (MAEEKHHHHLFHH) are compositionally biased toward basic residues. Disordered stretches follow at residues 1–27 (MAEEKHHHHLFHHKKDDEPATGVDSYG) and 106–138 (GAGGYAFHEHHEKKKDHKSAEESTGEKKHHLFG).

It belongs to the abscisic acid and water stress-induced protein family.

The protein localises to the nucleus. It is found in the cytoplasm. In terms of biological role, involved in tolerance to aluminum. Regulates the expression of different genes that collectively contribute to the protection of the cell in response to aluminum stress. This Oryza sativa subsp. indica (Rice) protein is Abscisic stress-ripening protein 5.